The primary structure comprises 271 residues: Zinc finger CCHC domain-containing protein 9 (271 aa).

Positions Met1–Lys40 are disordered. Ser48 carries the post-translational modification Phosphoserine. 4 consecutive CCHC-type zinc fingers follow at residues Met128 to Ala145, Gly155 to Ala172, Ala184 to Asp201, and Gly211 to Glu228.

It localises to the nucleus. Its subcellular location is the nucleolus. Functionally, may down-regulate transcription mediated by NF-kappa-B and the serum response element. In Homo sapiens (Human), this protein is Zinc finger CCHC domain-containing protein 9 (ZCCHC9).